Here is an 88-residue protein sequence, read N- to C-terminus: Small ribosomal subunit protein bS20 (88 aa).

This sequence belongs to the bacterial ribosomal protein bS20 family.

Functionally, binds directly to 16S ribosomal RNA. This chain is Small ribosomal subunit protein bS20, found in Bartonella tribocorum (strain CIP 105476 / IBS 506).